Consider the following 87-residue polypeptide: U3-theraphotoxin-Hhn1a 7 (87 aa).

Positions 1–24 are cleaved as a signal peptide; that stretch reads MVNMKASMFLTFAGLVLLFVVSYA. A propeptide spanning residues 25 to 52 is cleaved from the precursor; the sequence is SESEEKEFPKEMLSSIFAVDNDFKQEER. Disulfide bonds link C54-C67, C61-C72, and C66-C79.

Belongs to the neurotoxin 10 (Hwtx-1) family. 51 (Hntx-8) subfamily. Hntx-8 sub-subfamily. Expressed by the venom gland.

It localises to the secreted. In terms of biological role, ion channel inhibitor. This Cyriopagopus hainanus (Chinese bird spider) protein is U3-theraphotoxin-Hhn1a 7.